The chain runs to 146 residues: Angiogenin (146 aa).

The signal sequence occupies residues methionine 1–alanine 24. The residue at position 25 (glutamine 25) is a Pyrrolidone carboxylic acid. The active-site Proton acceptor is the histidine 37. Arginine 45 is a tRNA binding site. Cystine bridges form between cysteine 50/cysteine 105, cysteine 63/cysteine 116, and cysteine 81/cysteine 131. The Nucleolar localization signal motif lies at arginine 55–leucine 59. Residues cysteine 105 and isoleucine 127 each coordinate tRNA. Histidine 138 serves as the catalytic Proton donor.

It belongs to the pancreatic ribonuclease family. Homodimer. Interacts with RNH1; inhibiting ANG ribonuclease activity. Interacts with PCNA.

The protein resides in the secreted. It localises to the nucleus. Its subcellular location is the nucleolus. The protein localises to the cytoplasm. It is found in the stress granule. Has weak tRNA ribonuclease activity by itself due to partial autoinhibition by its C-terminus, which folds into a short alpha-helix that partially occludes the substrate-binding site. In absence of stress, the ribonuclease activity is inhibited by RNH1 in the cytoplasm. In response to stress, dissociates from RNH1 in the cytoplasm and associates with cytoplasmic ribosomes with vacant A-sites: ribosomes directly activate the tRNA ribonuclease activity of ANG by refolding the C-terminal alpha-helix. In response to stress, the angiogenic activity of ANG is inhibited by RNH1 in the nucleus. Functionally, secreted ribonuclease that can either promote or restrict cell proliferation of target cells, depending on the context. Endocytosed in target cells via its receptor PLXNB2 and translocates to the cytoplasm or nucleus. Under stress conditions, localizes to the cytoplasm and promotes the assembly of stress granules (SGs): specifically cleaves a subset of tRNAs within anticodon loops to produce tRNA-derived stress-induced fragments (tiRNAs), resulting in translation repression and inhibition of cell proliferation. tiRNas also prevent formation of apoptosome, thereby promoting cell survival. Preferentially cleaves RNAs between a pyrimidine and an adenosine residue, suggesting that it cleaves the anticodon loop of tRNA(Ala) (32-UUAGCAU-38) after positions 33 and 36. Cleaves a subset of tRNAs, including tRNA(Ala), tRNA(Glu), tRNA(Gly), tRNA(Lys), tRNA(Val), tRNA(His), tRNA(Asp) and tRNA(Sec). Under growth conditions and in differentiated cells, translocates to the nucleus and stimulates ribosomal RNA (rRNA) transcription, including that containing the initiation site sequences of 45S rRNA, thereby promoting cell growth and proliferation. Angiogenin induces vascularization of normal and malignant tissues via its ability to promote rRNA transcription. Involved in hematopoietic stem and progenitor cell (HSPC) growth and survival by promoting rRNA transcription in growth conditions and inhibiting translation in response to stress, respectively. Mediates the crosstalk between myeloid and intestinal epithelial cells to protect the intestinal epithelial barrier integrity: secreted by myeloid cells and promotes intestinal epithelial cells proliferation and survival. Also mediates osteoclast-endothelial cell crosstalk in growing bone: produced by osteoclasts and protects the neighboring vascular cells against senescence by promoting rRNA transcription. This Rhinopithecus avunculus (Tonkin snub-nosed monkey) protein is Angiogenin (ANG).